Consider the following 253-residue polypeptide: TCF3 fusion partner (253 aa).

Disordered stretches follow at residues 49–72 and 142–211; these read SGGLGGSGLRERDEEEEAARGRRR and DEGS…PELA. S167 carries the post-translational modification Phosphoserine. Pro residues predominate over residues 170–181; the sequence is RRTPAPPEPGSP. Residue T172 is modified to Phosphothreonine. Phosphoserine is present on residues S180 and S188. T207 is modified (phosphothreonine). Residue K216 forms a Glycyl lysine isopeptide (Lys-Gly) (interchain with G-Cter in SUMO2) linkage. The interval 234–253 is disordered; that stretch reads VSRGPDKLLPYPTLASPASD. S249 and S252 each carry phosphoserine.

As to quaternary structure, interacts with NOL3; translocates NOL3 into the nucleus and negatively regulated TFPT-induced cell death. Component of the chromatin remodeling INO80 complex; specifically part of a complex module associated with the N-terminus of INO80.

It localises to the nucleus. Functionally, appears to promote apoptosis in a p53/TP53-independent manner. In terms of biological role, putative regulatory component of the chromatin remodeling INO80 complex which is involved in transcriptional regulation, DNA replication and probably DNA repair. This is TCF3 fusion partner (TFPT) from Homo sapiens (Human).